We begin with the raw amino-acid sequence, 112 residues long: T cell receptor alpha variable 9-2 (112 aa).

An N-terminal signal peptide occupies residues 1-20 (MNYSPGLVSLILLLLGRTRG). An Ig-like domain is found at 21-112 (DSVTQMEGPV…DSAVYFCALS (92 aa)). Asn-41 is a glycosylation site (N-linked (GlcNAc...) asparagine). Cysteines 42 and 109 form a disulfide.

As to quaternary structure, alpha-beta TR is a heterodimer composed of an alpha and beta chain; disulfide-linked. The alpha-beta TR is associated with the transmembrane signaling CD3 coreceptor proteins to form the TR-CD3 (TcR or TCR). The assembly of alpha-beta TR heterodimers with CD3 occurs in the endoplasmic reticulum where a single alpha-beta TR heterodimer associates with one CD3D-CD3E heterodimer, one CD3G-CD3E heterodimer and one CD247 homodimer forming a stable octameric structure. CD3D-CD3E and CD3G-CD3E heterodimers preferentially associate with TR alpha and TR beta chains, respectively. The association of the CD247 homodimer is the last step of TcR assembly in the endoplasmic reticulum and is required for transport to the cell surface.

It is found in the cell membrane. Functionally, v region of the variable domain of T cell receptor (TR) alpha chain that participates in the antigen recognition. Alpha-beta T cell receptors are antigen specific receptors which are essential to the immune response and are present on the cell surface of T lymphocytes. Recognize peptide-major histocompatibility (MH) (pMH) complexes that are displayed by antigen presenting cells (APC), a prerequisite for efficient T cell adaptive immunity against pathogens. Binding of alpha-beta TR to pMH complex initiates TR-CD3 clustering on the cell surface and intracellular activation of LCK that phosphorylates the ITAM motifs of CD3G, CD3D, CD3E and CD247 enabling the recruitment of ZAP70. In turn ZAP70 phosphorylates LAT, which recruits numerous signaling molecules to form the LAT signalosome. The LAT signalosome propagates signal branching to three major signaling pathways, the calcium, the mitogen-activated protein kinase (MAPK) kinase and the nuclear factor NF-kappa-B (NF-kB) pathways, leading to the mobilization of transcription factors that are critical for gene expression and essential for T cell growth and differentiation. The T cell repertoire is generated in the thymus, by V-(D)-J rearrangement. This repertoire is then shaped by intrathymic selection events to generate a peripheral T cell pool of self-MH restricted, non-autoaggressive T cells. Post-thymic interaction of alpha-beta TR with the pMH complexes shapes TR structural and functional avidity. The polypeptide is T cell receptor alpha variable 9-2 (Homo sapiens (Human)).